Here is a 393-residue protein sequence, read N- to C-terminus: METFLFTSESVNEGHPDKLCDQISDAVLDACLEQDPDSKVACETCTKTNMVMVFGEITTKATVDYEKIVRDTCRSIGFVSDDVGLDADNCKVLVNIEQQSPDIAQGVHGHLTKRPEEIGAGDQGHMFGYATDETPEFMPLSHVLATKLGARLTEVRKNGTCPWLRPDGKTQVTVEYYNENGAMVPVRVHTVVISTQHDETVTNDQIAADLKEHVIKPVIPEKYLDERTIFHLNPSGRFVIGGPHGDAGLTGRKIIIDTYGGWGAHGGGAFSGKDPTKVDRSGAYIVRQAAKSIVANGLARRCIVQVSYAIGVPEPLSVFVDTYGTGKIPDKEILKIVKENFDFRPGMIAINLDLKRGGSGRFLKTAAYGHFGRDDPDFTWEVVKPLKWEKAAN.

Residue Glu-9 participates in Mg(2+) binding. Position 15 (His-15) interacts with ATP. Glu-43 contributes to the K(+) binding site. The L-methionine site is built by Glu-56 and Gln-99. ATP is bound by residues 167-169, 235-238, Asp-246, 252-253, Ala-269, Lys-273, and Lys-277; these read DGK, SGRF, and RK. L-methionine is bound at residue Asp-246. Residue Lys-277 participates in L-methionine binding.

It belongs to the AdoMet synthase family. As to quaternary structure, homotetramer. Requires Mn(2+) as cofactor. The cofactor is Mg(2+). It depends on Co(2+) as a cofactor. K(+) is required as a cofactor. NH4(+) serves as cofactor. Mostly expressed in roots, and, to a lower extent, in hypocotyls and cotyledons.

The protein localises to the cytoplasm. It carries out the reaction L-methionine + ATP + H2O = S-adenosyl-L-methionine + phosphate + diphosphate. Its pathway is amino-acid biosynthesis; S-adenosyl-L-methionine biosynthesis; S-adenosyl-L-methionine from L-methionine: step 1/1. With respect to regulation, inhibited by products of SAMS reaction (SAM, Pi, PPi), substrate analogs (cycloleucine and ethionine), and alternative nucleotides (GTP, CTP and ADP). Strongly repressed by PPPi. In terms of biological role, catalyzes the formation of S-adenosylmethionine from methionine and ATP. The reaction comprises two steps that are both catalyzed by the same enzyme: formation of S-adenosylmethionine (AdoMet) and triphosphate, and subsequent hydrolysis of the triphosphate. The protein is S-adenosylmethionine synthase 1 (SAMS1) of Catharanthus roseus (Madagascar periwinkle).